A 345-amino-acid polypeptide reads, in one-letter code: Phosphoribosylformylglycinamidine cyclo-ligase (345 aa).

This sequence belongs to the AIR synthase family.

It localises to the cytoplasm. The catalysed reaction is 2-formamido-N(1)-(5-O-phospho-beta-D-ribosyl)acetamidine + ATP = 5-amino-1-(5-phospho-beta-D-ribosyl)imidazole + ADP + phosphate + H(+). Its pathway is purine metabolism; IMP biosynthesis via de novo pathway; 5-amino-1-(5-phospho-D-ribosyl)imidazole from N(2)-formyl-N(1)-(5-phospho-D-ribosyl)glycinamide: step 2/2. The chain is Phosphoribosylformylglycinamidine cyclo-ligase from Actinobacillus pleuropneumoniae serotype 5b (strain L20).